A 131-amino-acid polypeptide reads, in one-letter code: CDGSH iron-sulfur domain-containing protein 2 homolog A (131 aa).

The Lumenal portion of the chain corresponds to 1–35 (MEFLSKIVRVHIPDYLNSVPVPDSFGGFLDLTAGQ). Residues 36–58 (WLHLFAFSGTVAAAVYMSVKPYL) form a helical membrane-spanning segment. The Cytoplasmic segment spans residues 59 to 131 (DKKDQKDQLV…GPLVLKRKDV (73 aa)). Residues Cys95, Cys97, Cys106, and His110 each coordinate [2Fe-2S] cluster.

It belongs to the CISD protein family. CISD2 subfamily. It depends on [2Fe-2S] cluster as a cofactor.

The protein localises to the endoplasmic reticulum membrane. This is CDGSH iron-sulfur domain-containing protein 2 homolog A from Branchiostoma floridae (Florida lancelet).